Reading from the N-terminus, the 679-residue chain is tRNA uridine 5-carboxymethylaminomethyl modification enzyme MnmG (679 aa).

15–20 (GAGHAG) is an FAD binding site. Residue 314 to 328 (GPRYCPSIEDKIVRF) participates in NAD(+) binding.

The protein belongs to the MnmG family. As to quaternary structure, homodimer. Heterotetramer of two MnmE and two MnmG subunits. It depends on FAD as a cofactor.

It is found in the cytoplasm. Functionally, NAD-binding protein involved in the addition of a carboxymethylaminomethyl (cmnm) group at the wobble position (U34) of certain tRNAs, forming tRNA-cmnm(5)s(2)U34. This is tRNA uridine 5-carboxymethylaminomethyl modification enzyme MnmG from Roseiflexus sp. (strain RS-1).